We begin with the raw amino-acid sequence, 527 residues long: Putative ABC transporter peptide-binding protein BMEII0859 (527 aa).

The N-terminal stretch at 1-23 (MRLRNFYSALALSAAVFAGPLYA) is a signal peptide.

This sequence belongs to the bacterial solute-binding protein 5 family. As to quaternary structure, the complex is composed of two ATP-binding proteins (BMEII0863 and BMEII0864), two transmembrane proteins (BMEII0860 and BMEII0861) and a solute-binding protein (BMEII0859).

It localises to the periplasm. In terms of biological role, probably part of an ABC transporter complex that could be involved in peptide import. In Brucella melitensis biotype 1 (strain ATCC 23456 / CCUG 17765 / NCTC 10094 / 16M), this protein is Putative ABC transporter peptide-binding protein BMEII0859.